The chain runs to 430 residues: Histidine--tRNA ligase (430 aa).

This sequence belongs to the class-II aminoacyl-tRNA synthetase family. In terms of assembly, homodimer.

The protein localises to the cytoplasm. It catalyses the reaction tRNA(His) + L-histidine + ATP = L-histidyl-tRNA(His) + AMP + diphosphate + H(+). The chain is Histidine--tRNA ligase from Chlamydia felis (strain Fe/C-56) (Chlamydophila felis).